A 209-amino-acid polypeptide reads, in one-letter code: Thiamine-phosphate synthase (209 aa).

Residues 40–44 and asparagine 72 each bind 4-amino-2-methyl-5-(diphosphooxymethyl)pyrimidine; that span reads QLREK. Positions 73 and 92 each coordinate Mg(2+). Serine 111 is a binding site for 4-amino-2-methyl-5-(diphosphooxymethyl)pyrimidine. 137–139 serves as a coordination point for 2-[(2R,5Z)-2-carboxy-4-methylthiazol-5(2H)-ylidene]ethyl phosphate; that stretch reads TNS. Lysine 140 contributes to the 4-amino-2-methyl-5-(diphosphooxymethyl)pyrimidine binding site. Residues glycine 167 and 187–188 each bind 2-[(2R,5Z)-2-carboxy-4-methylthiazol-5(2H)-ylidene]ethyl phosphate; that span reads IS.

This sequence belongs to the thiamine-phosphate synthase family. The cofactor is Mg(2+).

The enzyme catalyses 2-[(2R,5Z)-2-carboxy-4-methylthiazol-5(2H)-ylidene]ethyl phosphate + 4-amino-2-methyl-5-(diphosphooxymethyl)pyrimidine + 2 H(+) = thiamine phosphate + CO2 + diphosphate. It catalyses the reaction 2-(2-carboxy-4-methylthiazol-5-yl)ethyl phosphate + 4-amino-2-methyl-5-(diphosphooxymethyl)pyrimidine + 2 H(+) = thiamine phosphate + CO2 + diphosphate. The catalysed reaction is 4-methyl-5-(2-phosphooxyethyl)-thiazole + 4-amino-2-methyl-5-(diphosphooxymethyl)pyrimidine + H(+) = thiamine phosphate + diphosphate. Its pathway is cofactor biosynthesis; thiamine diphosphate biosynthesis; thiamine phosphate from 4-amino-2-methyl-5-diphosphomethylpyrimidine and 4-methyl-5-(2-phosphoethyl)-thiazole: step 1/1. Functionally, condenses 4-methyl-5-(beta-hydroxyethyl)thiazole monophosphate (THZ-P) and 2-methyl-4-amino-5-hydroxymethyl pyrimidine pyrophosphate (HMP-PP) to form thiamine monophosphate (TMP). This chain is Thiamine-phosphate synthase, found in Clostridium tetani (strain Massachusetts / E88).